The sequence spans 254 residues: Alcohol dehydrogenase (254 aa).

Position 10 to 33 (10 to 33) interacts with NAD(+); sequence FVAGLGGIGLDTSREIVKSGPKNL. Serine 138 is a binding site for substrate. Tyrosine 151 acts as the Proton acceptor in catalysis.

It belongs to the short-chain dehydrogenases/reductases (SDR) family. In terms of assembly, homodimer.

The catalysed reaction is a primary alcohol + NAD(+) = an aldehyde + NADH + H(+). It catalyses the reaction a secondary alcohol + NAD(+) = a ketone + NADH + H(+). This Drosophila heteroneura (Fruit fly) protein is Alcohol dehydrogenase (Adh).